The chain runs to 574 residues: Protein OBERON 2 (574 aa).

2 stretches are compositionally biased toward polar residues: residues 1–10 (MGTSSGSNHP) and 65–76 (SMSQKTEPDSME). The disordered stretch occupies residues 1–76 (MGTSSGSNHP…SQKTEPDSME (76 aa)). The PHD-type zinc-finger motif lies at 226–291 (LCMCTICNKF…VFKCRACNRT (66 aa)). Positions 416-524 (KKARMALETC…LFEKIKLQEN (109 aa)) form a coiled coil.

As to quaternary structure, self-interacts. Interacts with OBE1, OBE3 and OBE4. Binds to VPg of pea seed borne mosaic virus (PSbMV), turnip mosaic virus (TuMV) and lettuce mosaic virus (LMV), but not with VPg of tobacco etch virus (TEV), cowpea mosaic virus (CPMV), tomato black ring virus (TBRV) and grapevine fan leaf virus (GFLV). As to expression, expressed in roots, seedlings, stems, leaves, flowers and siliques, especially in the vasculature.

It localises to the nucleus. Probable transcription factor that acts together with OBE1 for the maintenance and/or establishment of both the shoot and root meristems, probably by controlling the expression of the meristem genes such as WUS, PLT1 and PLT2 and of genes required for auxin responses. Promotes cell meristematic activity via the WUSCHEL-CLAVATA pathway. Involved in the development of the basal pole and in auxin-mediated root and vascular development in the embryo. Confers sensitivity to turnip mosaic virus (TuMV) probably by promoting viral movement and multiplication via interaction with TuMV VPg. In Arabidopsis thaliana (Mouse-ear cress), this protein is Protein OBERON 2.